The following is a 539-amino-acid chain: uncharacterized protein (539 aa).

The segment at A316 to E433 is disordered. The span at H318–K352 shows a compositional bias: basic residues. Residues K362–F384 are compositionally biased toward basic and acidic residues. Polar residues predominate over residues N390–G402.

This is an uncharacterized protein from Treponema pallidum (strain Nichols).